The chain runs to 510 residues: ATP synthase subunit alpha (510 aa).

171–178 contributes to the ATP binding site; it reads GDRQTGKT.

Belongs to the ATPase alpha/beta chains family. As to quaternary structure, F-type ATPases have 2 components, CF(1) - the catalytic core - and CF(0) - the membrane proton channel. CF(1) has five subunits: alpha(3), beta(3), gamma(1), delta(1), epsilon(1). CF(0) has three main subunits: a(1), b(2) and c(9-12). The alpha and beta chains form an alternating ring which encloses part of the gamma chain. CF(1) is attached to CF(0) by a central stalk formed by the gamma and epsilon chains, while a peripheral stalk is formed by the delta and b chains.

The protein resides in the cell inner membrane. The enzyme catalyses ATP + H2O + 4 H(+)(in) = ADP + phosphate + 5 H(+)(out). In terms of biological role, produces ATP from ADP in the presence of a proton gradient across the membrane. The alpha chain is a regulatory subunit. The chain is ATP synthase subunit alpha from Phenylobacterium zucineum (strain HLK1).